A 264-amino-acid chain; its full sequence is Type III pantothenate kinase 2 (264 aa).

Residue 6–13 coordinates ATP; sequence DVGNTFTV. Substrate contacts are provided by residues Tyr100 and 107-110; that span reads GADR. Catalysis depends on Asp109, which acts as the Proton acceptor. A K(+)-binding site is contributed by Asp129. Residue Thr132 participates in ATP binding. Thr184 contributes to the substrate binding site.

This sequence belongs to the type III pantothenate kinase family. In terms of assembly, homodimer. NH4(+) serves as cofactor. It depends on K(+) as a cofactor.

The protein resides in the cytoplasm. It carries out the reaction (R)-pantothenate + ATP = (R)-4'-phosphopantothenate + ADP + H(+). It functions in the pathway cofactor biosynthesis; coenzyme A biosynthesis; CoA from (R)-pantothenate: step 1/5. Catalyzes the phosphorylation of pantothenate (Pan), the first step in CoA biosynthesis. This chain is Type III pantothenate kinase 2, found in Symbiobacterium thermophilum (strain DSM 24528 / JCM 14929 / IAM 14863 / T).